The sequence spans 224 residues: Phosphoglycolate phosphatase (224 aa).

The active-site Nucleophile is the Asp-8. 2 residues coordinate Mg(2+): Asp-8 and Asp-10. Lys-151 is a substrate binding site. Positions 174 and 178 each coordinate Mg(2+).

It belongs to the archaeal SPP-like hydrolase family. It depends on Mg(2+) as a cofactor.

It catalyses the reaction 2-phosphoglycolate + H2O = glycolate + phosphate. Functionally, catalyzes the dephosphorylation of 2-phosphoglycolate. The polypeptide is Phosphoglycolate phosphatase (Thermoplasma volcanium (strain ATCC 51530 / DSM 4299 / JCM 9571 / NBRC 15438 / GSS1)).